Consider the following 145-residue polypeptide: Large ribosomal subunit protein bL9 (145 aa).

It belongs to the bacterial ribosomal protein bL9 family.

Binds to the 23S rRNA. The protein is Large ribosomal subunit protein bL9 of Ureaplasma parvum serovar 3 (strain ATCC 700970).